A 164-amino-acid chain; its full sequence is Phosphopantetheine adenylyltransferase (164 aa).

Serine 9 contacts substrate. Residues 9–10 (SF) and histidine 17 each bind ATP. Substrate-binding residues include lysine 41, leucine 73, and lysine 87. Residues 88-90 (GLR), glutamate 98, and 123-129 (YSYLSSS) contribute to the ATP site.

Belongs to the bacterial CoaD family. In terms of assembly, homohexamer. Mg(2+) is required as a cofactor.

It is found in the cytoplasm. It carries out the reaction (R)-4'-phosphopantetheine + ATP + H(+) = 3'-dephospho-CoA + diphosphate. Its pathway is cofactor biosynthesis; coenzyme A biosynthesis; CoA from (R)-pantothenate: step 4/5. In terms of biological role, reversibly transfers an adenylyl group from ATP to 4'-phosphopantetheine, yielding dephospho-CoA (dPCoA) and pyrophosphate. In Clostridium botulinum (strain 657 / Type Ba4), this protein is Phosphopantetheine adenylyltransferase.